A 571-amino-acid chain; its full sequence is Proline--tRNA ligase (571 aa).

This sequence belongs to the class-II aminoacyl-tRNA synthetase family. ProS type 1 subfamily. Homodimer.

It is found in the cytoplasm. It catalyses the reaction tRNA(Pro) + L-proline + ATP = L-prolyl-tRNA(Pro) + AMP + diphosphate. Its function is as follows. Catalyzes the attachment of proline to tRNA(Pro) in a two-step reaction: proline is first activated by ATP to form Pro-AMP and then transferred to the acceptor end of tRNA(Pro). As ProRS can inadvertently accommodate and process non-cognate amino acids such as alanine and cysteine, to avoid such errors it has two additional distinct editing activities against alanine. One activity is designated as 'pretransfer' editing and involves the tRNA(Pro)-independent hydrolysis of activated Ala-AMP. The other activity is designated 'posttransfer' editing and involves deacylation of mischarged Ala-tRNA(Pro). The misacylated Cys-tRNA(Pro) is not edited by ProRS. This Mannheimia succiniciproducens (strain KCTC 0769BP / MBEL55E) protein is Proline--tRNA ligase.